Reading from the N-terminus, the 159-residue chain is Ribosomal RNA large subunit methyltransferase H (159 aa).

S-adenosyl-L-methionine is bound by residues leucine 76, glycine 108, and 127–132 (FGRMTY).

This sequence belongs to the RNA methyltransferase RlmH family. Homodimer.

It is found in the cytoplasm. The catalysed reaction is pseudouridine(1915) in 23S rRNA + S-adenosyl-L-methionine = N(3)-methylpseudouridine(1915) in 23S rRNA + S-adenosyl-L-homocysteine + H(+). Functionally, specifically methylates the pseudouridine at position 1915 (m3Psi1915) in 23S rRNA. The polypeptide is Ribosomal RNA large subunit methyltransferase H (Carboxydothermus hydrogenoformans (strain ATCC BAA-161 / DSM 6008 / Z-2901)).